The chain runs to 436 residues: MSEARKLFIKTYGCQMNVYDSERMAEALGAKGYVLTEVAEEADMVLLNTCHIREKAAEKVYSDLGRLRPLKTAKPDLKIGVAGCVAQAEGEEILKRMPLVDLVVGPQSYHRLPDMLERTEGGARVVDTDFPEEDKFDHLPERKATRGPAAFLTVQEGCDKFCAFCVVPYTRGAEVSRPFARLMAEARGLVERGVREITLLGQNVNAWSNDGRGLGGLIRELARIDGLERLRYTTSHPNDMADDLIEAHGAEPKLMPYLHLPVQSGSDRILKAMNRKHTAEHYLRLIERIRAARPDILLTSDFIVGFPGETEADFEATLDLIRAVGFGSAFSFKYSARPGTPAAEKPELPAEVCDARLQRLQALVTEQQRAAQMAMVGREVGVLYEKAGRLPGQMVGKSDHLHAVHVEDKAGQVGDLVRVRITASAPNSLAGERLGA.

Residues 5-121 (RKLFIKTYGC…LPDMLERTEG (117 aa)) form the MTTase N-terminal domain. [4Fe-4S] cluster is bound by residues cysteine 14, cysteine 50, cysteine 84, cysteine 158, cysteine 162, and cysteine 165. One can recognise a Radical SAM core domain in the interval 144–374 (ATRGPAAFLT…TEQQRAAQMA (231 aa)). Residues 373-435 (MAMVGREVGV…PNSLAGERLG (63 aa)) enclose the TRAM domain.

Belongs to the methylthiotransferase family. MiaB subfamily. Monomer. The cofactor is [4Fe-4S] cluster.

Its subcellular location is the cytoplasm. It catalyses the reaction N(6)-dimethylallyladenosine(37) in tRNA + (sulfur carrier)-SH + AH2 + 2 S-adenosyl-L-methionine = 2-methylsulfanyl-N(6)-dimethylallyladenosine(37) in tRNA + (sulfur carrier)-H + 5'-deoxyadenosine + L-methionine + A + S-adenosyl-L-homocysteine + 2 H(+). Catalyzes the methylthiolation of N6-(dimethylallyl)adenosine (i(6)A), leading to the formation of 2-methylthio-N6-(dimethylallyl)adenosine (ms(2)i(6)A) at position 37 in tRNAs that read codons beginning with uridine. The polypeptide is tRNA-2-methylthio-N(6)-dimethylallyladenosine synthase (Cereibacter sphaeroides (strain ATCC 17023 / DSM 158 / JCM 6121 / CCUG 31486 / LMG 2827 / NBRC 12203 / NCIMB 8253 / ATH 2.4.1.) (Rhodobacter sphaeroides)).